Here is a 524-residue protein sequence, read N- to C-terminus: Light-independent protochlorophyllide reductase subunit B (524 aa).

Position 36 (Asp-36) interacts with [4Fe-4S] cluster. The Proton donor role is filled by Asp-290. Residue 425 to 426 participates in substrate binding; that stretch reads GL.

This sequence belongs to the ChlB/BchB/BchZ family. Protochlorophyllide reductase is composed of three subunits; ChlL, ChlN and ChlB. Forms a heterotetramer of two ChlB and two ChlN subunits. It depends on [4Fe-4S] cluster as a cofactor.

The catalysed reaction is chlorophyllide a + oxidized 2[4Fe-4S]-[ferredoxin] + 2 ADP + 2 phosphate = protochlorophyllide a + reduced 2[4Fe-4S]-[ferredoxin] + 2 ATP + 2 H2O. It participates in porphyrin-containing compound metabolism; chlorophyll biosynthesis (light-independent). Functionally, component of the dark-operative protochlorophyllide reductase (DPOR) that uses Mg-ATP and reduced ferredoxin to reduce ring D of protochlorophyllide (Pchlide) to form chlorophyllide a (Chlide). This reaction is light-independent. The NB-protein (ChlN-ChlB) is the catalytic component of the complex. This Synechococcus sp. (strain CC9605) protein is Light-independent protochlorophyllide reductase subunit B.